The chain runs to 802 residues: Potassium channel AKT2/3 (802 aa).

Topologically, residues 1–79 are cytoplasmic; sequence MDLKYSASHC…PMDSRYRCWE (79 aa). Residues 80–100 form a helical membrane-spanning segment; it reads FYMVLLVAYSAWVYPFEVAFL. At 101 to 109 the chain is on the extracellular side; sequence NSSPKRNLC. Residues 110–130 form a helical membrane-spanning segment; the sequence is IADNIVDLFFAVDIVLTFFVA. Residues 131–153 lie on the Cytoplasmic side of the membrane; that stretch reads YIDERTQLLVREPKQIAVRYLST. Residues 154–174 form a helical membrane-spanning segment; it reads WFLMDVASTIPFDAIGYLITG. The Extracellular portion of the chain corresponds to 175–183; that stretch reads TSTLNITCN. N179 carries an N-linked (GlcNAc...) asparagine glycan. A helical; Voltage-sensor transmembrane segment spans residues 184–204; that stretch reads LLGLLRFWRLRRVKHLFTRLE. At 205-218 the chain is on the cytoplasmic side; it reads KDIRYSYFWIRCFR. The helical transmembrane segment at 219-239 threads the bilayer; sequence LLSVTLFLVHCAGCSYYLIAD. Topologically, residues 240–265 are extracellular; sequence RYPHQGKTWTDAIPNFTETSLSIRYI. N254 is a glycosylation site (N-linked (GlcNAc...) asparagine). An intramembrane region (pore-forming) is located at residues 266 to 285; it reads AAIYWSITTMTTVGYGDLHA. Residues 286-288 lie on the Extracellular side of the membrane; that stretch reads SNT. A helical transmembrane segment spans residues 289 to 309; sequence IEMVFITVYMLFNLGLTAYLI. Topologically, residues 310–802 are cytoplasmic; the sequence is GNMTNLVVEG…KLYFVVNKII (493 aa). Residue 394 to 513 participates in a nucleoside 3',5'-cyclic phosphate binding; it reads LFKGVSREIL…ATMLKNFLQH (120 aa). ANK repeat units lie at residues 540–569, 573–602, 606–636, 637–666, and 670–699; these read NIASNLIAVVTTGNAALLDELLKAKLSPDI, KGKTPLHVAASRGYEDCVLVLLKHGCNIHI, NGNSALWEAIISKHYEIFRILYHFAAISDPH, IAGDLLCEAAKQNNVEVMKALLKQGLNVDT, and HGVTALQVAMAEDQMDMVNLLATNGADVVC. Residues 725–802 form the KHA domain; sequence RVSIYRGHPL…KLYFVVNKII (78 aa).

It belongs to the potassium channel family. Plant (TC 1.A.1.4) subfamily. The potassium channel is probably composed of a homo- or heterotetrameric complex of pore-forming subunits. Interacts with the phosphatase PPC2A and the kinase CIPK6. May interact with AKT1, KAT1 and KAT3. Interacts with SLAC1. In terms of processing, dephosphorylated by PP2CA. In terms of tissue distribution, expressed mainly in the phloem tissues throughout the plant but also, at a lower level, in leaf epiderm, mesophyll and guard cells.

Its subcellular location is the endoplasmic reticulum membrane. Highly selective and weak inward-rectifying potassium channel. Plays a role in both loading and unloading potassium into/from the phloem sap. Seems to control sugar loading into phloem via a voltage-dependent process. Blocked by physiological concentrations of external calcium and by external acidification. May interact with the cytoskeleton or with regulatory proteins. Dephosphorylation by PP2CA not only leads to the inhibition of potassium currents but also to an increase of the voltage-dependence of the channel. Regulated by the CBL4/CIPK6 calcium sensor/protein kinase complex via a kinase interaction-dependent but phosphorylation-independent translocation of the channel to the plasma membrane. This chain is Potassium channel AKT2/3 (AKT2), found in Arabidopsis thaliana (Mouse-ear cress).